The primary structure comprises 244 residues: UPF0246 protein SGO_1307 (244 aa).

The protein belongs to the UPF0246 family.

This Streptococcus gordonii (strain Challis / ATCC 35105 / BCRC 15272 / CH1 / DL1 / V288) protein is UPF0246 protein SGO_1307.